The sequence spans 435 residues: Prenyltransferase nanD (435 aa).

Glu-101 serves as a coordination point for substrate. Dimethylallyl diphosphate is bound by residues Arg-114, Lys-202, and Tyr-204. Tyr-206 serves as a coordination point for substrate. 5 residues coordinate dimethylallyl diphosphate: Lys-280, Tyr-282, Tyr-364, Tyr-429, and Tyr-433.

It belongs to the tryptophan dimethylallyltransferase family.

Its pathway is secondary metabolite biosynthesis. Functionally, prenyltransferase; part of the gene cluster that mediates the biosynthesis of the benzazepine alkaloid nanangelenin A which contains an unprecedented 3,4-dihydro-1-benzazepine-2,5-dione-N-prenyl-N-acetoxy-anthranilamide scaffold. The first step of nanangelenin biosynthesis is catalyzed by the indoleamine 2,3-dioxygenase nanC which produces N-formyl-kynurenine through the catabolism of tryptophan. The two-module NRPS nanA then utilizes anthranilate (Ant) and L-kynurenine (L-Kyn) to assemble the dipeptide product nanangelenin B. The first adenylation domain of nanA (A1) loads anthranilate onto the T1 domain, while A2 loads kynurenine, generated through spontaneous nonenzymatic deformylation of the nanC-supplied N-formyl-kynurenine. The peptide bond formation between the tethered amino acids is catalyzed by the first condensation domain (C1) between anthranilate's carbonyl carbon and kynurenine's aliphatic primary amine. The second C domain (C2) catalyzes the final cyclization event between the aromatic amine of kynurenine and the tethered carbonyl carbon, yielding nanangelenin B. The terminal T3 domain enhances the catalytic efficiency of C2, suggesting the T2-tethered Ant-L-Kyn is transferred to T3 prior to cyclization by C2. Once released from nanA, nanangelenin B is then prenylated by the prenyltransferase nanD to form nanangelenin C. Nanangelenin C is then N-hydroxylated by the FAD-dependent monooxygenase nanF and further acetylated by the acetyltransferase nanB to yield nanangelenin F. Finally, the N-methyltransferase nanE methylates the amide nitrogen of 1-benzazepine to convert nanangelenin F into nanangelenin A. NanE is also able to methylate most of the intermediates of the pathway such as nanangelenin B and nanangelenin C to produce nanangelenin D and nanangelenin E, respectively. In Aspergillus nanangensis, this protein is Prenyltransferase nanD.